A 255-amino-acid chain; its full sequence is Gene 54 protein (255 aa).

The chain is Gene 54 protein (54) from Mycobacterium phage D29 (Mycobacteriophage D29).